Reading from the N-terminus, the 1201-residue chain is Autophagy-related protein 11 (1201 aa).

The interval 90-109 (FPFLGRPSTPTKGSDNSTGT) is disordered. A compositionally biased stretch (polar residues) spans 97–109 (STPTKGSDNSTGT). Residues 418–452 (LLRSDDMVRSLRDEKSKLEEKVKGSESRIRKLEDL) are a coiled coil. 2 disordered regions span residues 458–503 (HMGR…SEEK) and 525–545 (KLQKDAHAERQSNTDKIQEVQ). The span at 485 to 499 (RRSSVSSRRMSSNQS) shows a compositional bias: low complexity. Over residues 525 to 542 (KLQKDAHAERQSNTDKIQ) the composition is skewed to basic and acidic residues. 2 coiled-coil regions span residues 566–670 (RRFL…ALQA) and 710–828 (SAKA…WKER). Disordered regions lie at residues 1052–1076 (SMNGANPDRRSIGEASDGTSFDDEN) and 1115–1201 (DARG…LQGP). Polar residues predominate over residues 1133–1166 (RTLSKSLDSRRNSSNSKKGPATPSQRGNDSTTDL). Residues 1191-1201 (EEVRRDQLQGP) are compositionally biased toward basic and acidic residues.

Belongs to the ATG11 family. Homodimer and potential homooligomers.

Its subcellular location is the preautophagosomal structure membrane. Selective autophagy-specific protein required for pexophagy and mitophagy. In contrast to its Saccharomyces cerevisiae ATG11 ortholog, is not involved in non-selective autophagy nor in cytoplasm to vacuole transport (Cvt). In Aspergillus oryzae (strain ATCC 42149 / RIB 40) (Yellow koji mold), this protein is Autophagy-related protein 11.